The sequence spans 174 residues: Adenylate kinase (174 aa).

An NMP region spans residues 12–41; it reads STGDMLRAAIKAGTPLGLEAKKIIDEGGLV. AMP-binding positions include T13, R18, 39-41, 67-70, and Q74; these read GLV and GFPR. Residues 104–141 form an LID region; sequence GRRVHLASGRTYHVTYNPPKVEGKDDVTGEDLIQRDDD. ATP contacts are provided by residues R105 and 114-115; that span reads TY. AMP-binding residues include R138 and R149.

The protein belongs to the adenylate kinase family. In terms of assembly, monomer.

The protein resides in the cytoplasm. The enzyme catalyses AMP + ATP = 2 ADP. It functions in the pathway purine metabolism; AMP biosynthesis via salvage pathway; AMP from ADP: step 1/1. Catalyzes the reversible transfer of the terminal phosphate group between ATP and AMP. Plays an important role in cellular energy homeostasis and in adenine nucleotide metabolism. This chain is Adenylate kinase, found in Neisseria flavescens.